The sequence spans 216 residues: CRIB domain-containing protein RIC7 (216 aa).

Positions 36–49 (IGNPTDVKHVAHIG) constitute a CRIB domain. The disordered stretch occupies residues 52-216 (GPSDNATAPS…PQFEDDRNGF (165 aa)). The segment covering 108–121 (SSSEKGSPTKERSD) has biased composition (basic and acidic residues).

In terms of assembly, interacts with ARAC4/ROP2 and ARAC11/ROP1. In terms of tissue distribution, expressed in roots, leaves, guard cells, stems, flowers, siliques and pollen.

The protein resides in the nucleus. Its subcellular location is the cytoplasm. It is found in the cell membrane. In terms of biological role, functions as a downstream effector of Rho-related GTP binding proteins of the 'Rho of Plants' (ROPs) family. Participates in the propagation of ROP GTPase signals in specific cellular responses. Functions as a downstream effector of active ARAC4/ROP2 GTPase which is involved in the prevention of excessive stomatal opening upon light stimulation. Is involved in pollen tube growth regulation through its interaction with ARAC11/ROP1. The protein is CRIB domain-containing protein RIC7 (RIC7) of Arabidopsis thaliana (Mouse-ear cress).